The chain runs to 285 residues: Iron uptake system component EfeM (285 aa).

A signal peptide spans 1–34; it reads MTYPLLTRKTLMKKTPLALLLTLGLLQTPLAAFA.

This sequence belongs to the EfeM/EfeO family. As to quaternary structure, component of the iron transporter efeUOB/M complex composed of EfeU, EfeM and EfeB.

The protein resides in the periplasm. Part of the iron transporter system efeUOB/M involved in iron import. Specifically binds Fe(3+), which is produced by EfeB-mediated oxidation of Fe(2+), and delivers it to the cell inner membrane permease EfeU. Also binds Zn(2+) and Cu(2+) in vitro. The polypeptide is Iron uptake system component EfeM (Pseudomonas syringae pv. syringae (strain B728a)).